Reading from the N-terminus, the 176-residue chain is ATP synthase subunit b (176 aa).

Residues 18–38 form a helical membrane-spanning segment; that stretch reads FGLDATVWVSIAMLVFLGILV.

It belongs to the ATPase B chain family. In terms of assembly, F-type ATPases have 2 components, F(1) - the catalytic core - and F(0) - the membrane proton channel. F(1) has five subunits: alpha(3), beta(3), gamma(1), delta(1), epsilon(1). F(0) has three main subunits: a(1), b(2) and c(10-14). The alpha and beta chains form an alternating ring which encloses part of the gamma chain. F(1) is attached to F(0) by a central stalk formed by the gamma and epsilon chains, while a peripheral stalk is formed by the delta and b chains.

The protein localises to the cell inner membrane. In terms of biological role, f(1)F(0) ATP synthase produces ATP from ADP in the presence of a proton or sodium gradient. F-type ATPases consist of two structural domains, F(1) containing the extramembraneous catalytic core and F(0) containing the membrane proton channel, linked together by a central stalk and a peripheral stalk. During catalysis, ATP synthesis in the catalytic domain of F(1) is coupled via a rotary mechanism of the central stalk subunits to proton translocation. Component of the F(0) channel, it forms part of the peripheral stalk, linking F(1) to F(0). This chain is ATP synthase subunit b, found in Sphingopyxis alaskensis (strain DSM 13593 / LMG 18877 / RB2256) (Sphingomonas alaskensis).